Reading from the N-terminus, the 540-residue chain is Chaperonin GroEL (540 aa).

ATP is bound by residues 30-33, lysine 51, 87-91, glycine 415, 479-481, and aspartate 495; these read TLAP, DGTTT, and NAA.

It belongs to the chaperonin (HSP60) family. As to quaternary structure, forms a cylinder of 14 subunits composed of two heptameric rings stacked back-to-back. Interacts with the co-chaperonin GroES.

Its subcellular location is the cytoplasm. The enzyme catalyses ATP + H2O + a folded polypeptide = ADP + phosphate + an unfolded polypeptide.. In terms of biological role, together with its co-chaperonin GroES, plays an essential role in assisting protein folding. The GroEL-GroES system forms a nano-cage that allows encapsulation of the non-native substrate proteins and provides a physical environment optimized to promote and accelerate protein folding. The sequence is that of Chaperonin GroEL from Methylovorus sp. (strain SS1 / DSM 11726).